We begin with the raw amino-acid sequence, 392 residues long: MLMSLAQWLQTLSPEFGFLRVFQYLTFRALMAALTALVVGLVAGPYVIRRLAALKIGQPVRGYGMETHLTKSGTPTMGGVLVLFAIAFATLMWFDPSNRFVWIVLWVTLGFGAIGWVDDWRKVVRKDPEGMRSREKYFWQSVVGLIAGFYLLFSISESSNWRVLQLFFAWVQSGFDLDFPPKINLLVPFFKEVSYPLGGIGFVILTYLVIVGASNAVNLTDGLDGLAIMPVVMVGSALGVFAYVTGSAVYSKYLLFPNIPGSGELLVFCSAMAGAGLAFLWFNTHPAQVFMGDVGALALGGALGTIAVIVRQEIVFFIMGGIFVVEAISVMAQVMYFKYTKKRYGEGRRVLKMAPLHHHFEKSGWRETQVVVRFWIITMLLCLIGLSTLKLR.

10 consecutive transmembrane segments (helical) span residues Arg28 to Ile48, Thr74 to Phe94, Phe100 to Trp120, Tyr137 to Glu157, Val193 to Ala213, Gly225 to Thr245, Ser262 to Phe282, Val289 to Ile309, Ile314 to Val334, and Gln369 to Leu389.

The protein belongs to the glycosyltransferase 4 family. MraY subfamily. The cofactor is Mg(2+).

It localises to the cell inner membrane. It carries out the reaction UDP-N-acetyl-alpha-D-muramoyl-L-alanyl-gamma-D-glutamyl-meso-2,6-diaminopimeloyl-D-alanyl-D-alanine + di-trans,octa-cis-undecaprenyl phosphate = di-trans,octa-cis-undecaprenyl diphospho-N-acetyl-alpha-D-muramoyl-L-alanyl-D-glutamyl-meso-2,6-diaminopimeloyl-D-alanyl-D-alanine + UMP. The protein operates within cell wall biogenesis; peptidoglycan biosynthesis. Catalyzes the initial step of the lipid cycle reactions in the biosynthesis of the cell wall peptidoglycan: transfers peptidoglycan precursor phospho-MurNAc-pentapeptide from UDP-MurNAc-pentapeptide onto the lipid carrier undecaprenyl phosphate, yielding undecaprenyl-pyrophosphoryl-MurNAc-pentapeptide, known as lipid I. The sequence is that of Phospho-N-acetylmuramoyl-pentapeptide-transferase from Variovorax paradoxus (strain S110).